The following is a 357-amino-acid chain: Homoserine kinase (357 aa).

This sequence belongs to the GHMP kinase family. Homoserine kinase subfamily.

It catalyses the reaction L-homoserine + ATP = O-phospho-L-homoserine + ADP + H(+). Its pathway is amino-acid biosynthesis; L-threonine biosynthesis; L-threonine from L-aspartate: step 4/5. In terms of biological role, commits homoserine to the threonine biosynthesis pathway by catalyzing its O-phosphorylation. This Cryptococcus neoformans var. grubii serotype A (strain H99 / ATCC 208821 / CBS 10515 / FGSC 9487) (Filobasidiella neoformans var. grubii) protein is Homoserine kinase.